Here is an 81-residue protein sequence, read N- to C-terminus: RNA-binding protein Hfq (81 aa).

The Sm domain occupies Asp-10–Val-69.

It belongs to the Hfq family. As to quaternary structure, homohexamer.

Its function is as follows. RNA chaperone that binds small regulatory RNA (sRNAs) and mRNAs to facilitate mRNA translational regulation in response to envelope stress, environmental stress and changes in metabolite concentrations. Also binds with high specificity to tRNAs. The sequence is that of RNA-binding protein Hfq from Methylobacillus flagellatus (strain ATCC 51484 / DSM 6875 / VKM B-1610 / KT).